The primary structure comprises 420 residues: MSNTQKQLALAKAAKKSVNTADAEEKNRALLAMADSLEAAAEDILAANRLDLKAAAGKIPDSMTDRLLLDGKRICAMADGIRAVAALPDPVGEILETSTLPNGLEIVKKRVAMGVIGIIYESRPNVTSDAAALALKSGSAVVLRSGKDAFQSARAIVAALKTGLAQTRIDPEAVQLIEDTGREGSYEMMRAKDYLDLLIPRGGAGLIRAVVENAVVPVIETGTGIVHIYIDKDADWDKALRIVYNAKTGRPSVCNSMEVLLVHEGIAADFLPKLERLLVRGRIEAGLPPVRFRLDPQAARYIGGEAAGADDFDTEFLDYILAVKTVASVEEAVGHIEARGTHHSDGIVTENRHAADYFTTHIDSAAVYINASTRFTDGGEFGLGCEMGISTQKLHARGPMGLKELTSYKYIVQGTGQVRE.

This sequence belongs to the gamma-glutamyl phosphate reductase family.

The protein localises to the cytoplasm. It carries out the reaction L-glutamate 5-semialdehyde + phosphate + NADP(+) = L-glutamyl 5-phosphate + NADPH + H(+). The protein operates within amino-acid biosynthesis; L-proline biosynthesis; L-glutamate 5-semialdehyde from L-glutamate: step 2/2. Its function is as follows. Catalyzes the NADPH-dependent reduction of L-glutamate 5-phosphate into L-glutamate 5-semialdehyde and phosphate. The product spontaneously undergoes cyclization to form 1-pyrroline-5-carboxylate. The polypeptide is Gamma-glutamyl phosphate reductase (Neisseria gonorrhoeae (strain ATCC 700825 / FA 1090)).